The chain runs to 899 residues: MAKKKSKSRSKSSRRVLDALQLAEREINGEFDNSSDNDKRHDARRNGTVVNLLKRSKGDTNSDEDDIDSESFEDEELNSDEALGSDDDYDILNSKFSQTIRDKKENANYQEEEDEGGYTSIDEEDLMPLSQVWDMDEKTAQSNGNDDEDASPQLKLQDTDISSESSSSEESESESEDDEEEEDPFDEISEDEEDIELNTITSKLIDETKSKAPKRLDTYGSGEANEYVLPSANAASGASGKLSLTDMMNVIDDRQVIENANLLKGKSSTYEVPLPQRIQQRHDRKAAYEISRQEVSKWNDIVQQNRRADHLIFPLNKPTEHNHASAFTRTQDVPQTELQEKVDQVLQESNLANPEKDSKFEELSTAKMTPEEMRKRTTEMRLMRELMFREERKARRLKKIKSKTYRKIKKKELMKNRELAAVSSDEDNEDHDIARAKERMTLKHKTNSKWAKDMIKHGMTNDAETREEMEEMLRQGERLKAKMLDRNSDDEEDGRVQTLSDVENEEKENIDSEALKSKLGKTGVMNMAFMKNGEAREREANKETLRQLRAVENGDDIKLFESDEEETNGENIQINKGRRIYTPGSLESNKDMNELNDHTRKENKVDESRSLENRLRAKNSGQSKNARTNAEGAIIVEEESDGEPLQDGQNNQQDEEAKDVNPWLANESDEEHTVKKQSSKVNVIDKDSSKNVKAMNKMEKAELKQKKKKKGKSNDDEDLLLTADDSTRLKIVDPYGGSDDEQGDNVFMFKQQDVIAEAFAGDDVVAEFQEEKKRVIDDEDDKEVDTTLPGWGEWAGAGSKPKNKKRKFIKKVKGVVNKDKRRDKNLQNVIINEKVNKKNLKYQSSAVPFPFENREQYERSLRMPIGQEWTSRASHQELIKPRIMTKPGQVIDPLKAPFK.

Over residues 1 to 14 the composition is skewed to basic residues; it reads MAKKKSKSRSKSSR. A disordered region spans residues 1-197; the sequence is MAKKKSKSRS…ISEDEEDIEL (197 aa). Phosphoserine occurs at positions 34 and 35. Positions 36-45 are enriched in basic and acidic residues; it reads DNDKRHDARR. Composition is skewed to acidic residues over residues 61–90 and 110–126; these read NSDEDDIDSESFEDEELNSDEALGSDDDYD and QEEEDEGGYTSIDEEDL. At serine 151 the chain carries Phosphoserine. Over residues 167-196 the composition is skewed to acidic residues; that stretch reads SSEESESESEDDEEEEDPFDEISEDEEDIE. Residue 260–267 coordinates ATP; the sequence is ANLLKGKS. Serine 423, serine 424, serine 488, serine 500, and serine 562 each carry phosphoserine. Disordered stretches follow at residues 485–509 and 559–721; these read DRNSDDEEDGRVQTLSDVENEEKEN and LFES…DLLL. Over residues 588 to 615 the composition is skewed to basic and acidic residues; sequence SNKDMNELNDHTRKENKVDESRSLENRL. The segment covering 619 to 628 has biased composition (polar residues); it reads NSGQSKNART. A Phosphoserine modification is found at serine 668. Residues 683-704 are compositionally biased toward basic and acidic residues; sequence VIDKDSSKNVKAMNKMEKAELK. Phosphoserine is present on serine 738. The interval 776–805 is disordered; sequence IDDEDDKEVDTTLPGWGEWAGAGSKPKNKK.

This sequence belongs to the UTP14 family. In terms of assembly, interacts with snoRNA U3. Interacts with MPP10. Component of the ribosomal small subunit (SSU) processome composed of at least 40 protein subunits and snoRNA U3.

Its subcellular location is the nucleus. The protein resides in the nucleolus. Its function is as follows. Involved in nucleolar processing of pre-18S ribosomal RNA. The protein is U3 small nucleolar RNA-associated protein 14 (UTP14) of Saccharomyces cerevisiae (strain ATCC 204508 / S288c) (Baker's yeast).